Consider the following 470-residue polypeptide: Uronate isomerase (470 aa).

This sequence belongs to the metallo-dependent hydrolases superfamily. Uronate isomerase family.

It carries out the reaction D-glucuronate = D-fructuronate. The catalysed reaction is aldehydo-D-galacturonate = keto-D-tagaturonate. It participates in carbohydrate metabolism; pentose and glucuronate interconversion. The sequence is that of Uronate isomerase from Salmonella heidelberg (strain SL476).